Reading from the N-terminus, the 88-residue chain is U24 protein (88 aa).

Thr6 carries the phosphothreonine modification. The PPXY motif signature appears at 8 to 11 (PPSY). Residues 58–78 (FAFLVLTGLAIAMILFIAFVI) form a helical membrane-spanning segment.

As to quaternary structure, interacts with host ITCH; this interaction probably mediates ITCH degradation. Interacts probably with NEDD4.

The protein resides in the membrane. Functionally, down-regulates the TCR/CD3E complex and the transferrin receptor TFRC in host T-cells by blocking them from recycling back to the cell surface. In Human herpesvirus 6B (strain Z29) (HHV-6 variant B), this protein is U24 protein (U24).